A 235-amino-acid chain; its full sequence is tRNA (guanine-N(1)-)-methyltransferase (235 aa).

Residues G112 and 132 to 137 contribute to the S-adenosyl-L-methionine site; that span reads IGDYVL.

The protein belongs to the RNA methyltransferase TrmD family. As to quaternary structure, homodimer.

Its subcellular location is the cytoplasm. The catalysed reaction is guanosine(37) in tRNA + S-adenosyl-L-methionine = N(1)-methylguanosine(37) in tRNA + S-adenosyl-L-homocysteine + H(+). Specifically methylates guanosine-37 in various tRNAs. The polypeptide is tRNA (guanine-N(1)-)-methyltransferase (Cytophaga hutchinsonii (strain ATCC 33406 / DSM 1761 / CIP 103989 / NBRC 15051 / NCIMB 9469 / D465)).